Reading from the N-terminus, the 322-residue chain is Ubiquinone biosynthesis O-methyltransferase, mitochondrial (322 aa).

The transit peptide at 1 to 37 (MLASVRVNQLQRLLLSARRLSSSPIIPPSRLLHQRLF) directs the protein to the mitochondrion. The disordered stretch occupies residues 46–75 (AASFSSSHPKIQTLEGKASNKSRSTSSTTS). The S-adenosyl-L-methionine site is built by Arg-108, Gly-139, Asp-160, and Leu-205. Positions 206, 209, and 210 each coordinate Mg(2+).

Belongs to the class I-like SAM-binding methyltransferase superfamily. UbiG/COQ3 family. As to quaternary structure, component of a multi-subunit COQ enzyme complex. It depends on Mg(2+) as a cofactor.

It is found in the mitochondrion inner membrane. The enzyme catalyses a 3,4-dihydroxy-5-(all-trans-polyprenyl)benzoate + S-adenosyl-L-methionine = a 4-hydroxy-3-methoxy-5-(all-trans-polyprenyl)benzoate + S-adenosyl-L-homocysteine + H(+). It catalyses the reaction a 3-demethylubiquinone + S-adenosyl-L-methionine = a ubiquinone + S-adenosyl-L-homocysteine. The catalysed reaction is a 3-demethylubiquinol + S-adenosyl-L-methionine = a ubiquinol + S-adenosyl-L-homocysteine + H(+). The protein operates within cofactor biosynthesis; ubiquinone biosynthesis. Functionally, O-methyltransferase required for two non-consecutive steps during ubiquinone biosynthesis. Catalyzes the 2 O-methylation of 3,4-dihydroxy-5-(all-trans-polyprenyl)benzoic acid into 4-hydroxy-3-methoxy-5-(all-trans-polyprenyl)benzoic acid. Also catalyzes the last step of ubiquinone biosynthesis by mediating methylation of 3-demethylubiquinone into ubiquinone. Also able to mediate the methylation of 3-demethylubiquinol into ubiquinol. This chain is Ubiquinone biosynthesis O-methyltransferase, mitochondrial, found in Arabidopsis thaliana (Mouse-ear cress).